A 342-amino-acid polypeptide reads, in one-letter code: Putative ABC transporter anion-binding protein HVO_1888 (342 aa).

Positions 1–32 (MAIERRRFLQAAGVGAVLGLSGCTGNTSPPQA) form a signal peptide, tat-type signal. Residues 24 to 37 (TGNTSPPQANNETA) show a composition bias toward polar residues. The tract at residues 24 to 52 (TGNTSPPQANNETAEGSGGSESGDGSTQE) is disordered.

As to quaternary structure, the complex is composed of two ATP-binding proteins (HVO_1886), two transmembrane proteins (HVO_1887) and a solute-binding protein (HVO_1888). Post-translationally, predicted to be exported by the Tat system. The position of the signal peptide cleavage has not been experimentally proven.

In terms of biological role, part of an ABC transporter complex involved in anions import. This is Putative ABC transporter anion-binding protein HVO_1888 from Haloferax volcanii (strain ATCC 29605 / DSM 3757 / JCM 8879 / NBRC 14742 / NCIMB 2012 / VKM B-1768 / DS2) (Halobacterium volcanii).